The primary structure comprises 264 residues: Apolipoprotein A-I (264 aa).

The first 18 residues, 1–18, serve as a signal peptide directing secretion; it reads MKAVVLALAVLFLTGSQA. 2 tandem repeats follow at residues 67–88 and 89–110. A 10 X approximate tandem repeats region spans residues 67-264; the sequence is LHLLDNWDTL…DEASKKLNAQ (198 aa). A Methionine sulfoxide modification is found at Met109. A 3; half-length repeat occupies 111–121; the sequence is KDLEEVKVKVQ. Repeat copies occupy residues 122 to 143, 144 to 165, 166 to 187, 188 to 207, and 208 to 229. The 9; half-length repeat unit spans residues 230–240; that stretch reads PALEDLRQGLM. Copy 10 of the repeat occupies 241-264; it reads PVLENLKTTVLAAIDEASKKLNAQ.

The protein belongs to the apolipoprotein A1/A4/E family. In terms of assembly, homodimer. Interacts with APOA1BP and CLU. Component of a sperm activating protein complex (SPAP), consisting of APOA1, an immunoglobulin heavy chain, an immunoglobulin light chain and albumin. Interacts with NDRG1. Interacts with SCGB3A2. Interacts with NAXE and YJEFN3. Glycosylated. Post-translationally, palmitoylated. In terms of processing, phosphorylation sites are present in the extracellular medium.

The protein localises to the secreted. Functionally, participates in the reverse transport of cholesterol from tissues to the liver for excretion by promoting cholesterol efflux from tissues and by acting as a cofactor for the lecithin cholesterol acyltransferase (LCAT). As part of the SPAP complex, activates spermatozoa motility. The chain is Apolipoprotein A-I (APOA1) from Jaculus jaculus (Lesser Egyptian jerboa).